A 339-amino-acid polypeptide reads, in one-letter code: 4-hydroxy-2-oxovalerate aldolase (339 aa).

Residues 8–260 (IILHDMCLRD…STDVDVFKLM (253 aa)) enclose the Pyruvate carboxyltransferase domain. Residue 16-17 (RD) participates in substrate binding. Asp-17 lines the Mn(2+) pocket. The active-site Proton acceptor is His-20. The substrate site is built by Ser-170 and His-199. Mn(2+) contacts are provided by His-199 and His-201. Tyr-290 serves as a coordination point for substrate.

This sequence belongs to the 4-hydroxy-2-oxovalerate aldolase family.

The enzyme catalyses (S)-4-hydroxy-2-oxopentanoate = acetaldehyde + pyruvate. This chain is 4-hydroxy-2-oxovalerate aldolase, found in Shewanella woodyi (strain ATCC 51908 / MS32).